A 208-amino-acid polypeptide reads, in one-letter code: Probable transcriptional regulator ycf29 (208 aa).

Residues 11-118 (KLILIEPEEH…ELIAIISNLI (108 aa)) enclose the Response regulatory domain. D60 carries the 4-aspartylphosphate modification. An HTH luxR-type domain is found at 146-208 (TSFSYINLTV…NRIQILSYFN (63 aa)).

It localises to the plastid. Its subcellular location is the chloroplast. This Guillardia theta (Cryptophyte) protein is Probable transcriptional regulator ycf29 (ycf29).